Consider the following 333-residue polypeptide: Nucleoid-associated protein (333 aa).

Belongs to the YejK family.

The protein localises to the cytoplasm. Its subcellular location is the nucleoid. In Metapseudomonas resinovorans (Pseudomonas resinovorans), this protein is Nucleoid-associated protein.